The following is a 297-amino-acid chain: Protoheme IX farnesyltransferase 1 (297 aa).

9 consecutive transmembrane segments (helical) span residues 23 to 43, 45 to 65, 93 to 113, 117 to 137, 145 to 165, 171 to 191, 216 to 236, 241 to 261, and 277 to 297; these read VVVLMLITSLAGMFLATRAGV, WSVLLFGNLGIGLCAGGAAVV, LPALLFALALALLGMALLLAF, LTAWLTLASLLGYAVLYTGFL, IVIGGLAGAAPPLLGWVAVSG, PLLLVLIIFAWTPPHFWALAI, LHILLYTLILLAVSLLPYAIH, LYLACALVLGLRFLQWAWVLY, and IAYLFALFIALLLDHYLLLNL.

Belongs to the UbiA prenyltransferase family. Protoheme IX farnesyltransferase subfamily.

The protein localises to the cell inner membrane. It carries out the reaction heme b + (2E,6E)-farnesyl diphosphate + H2O = Fe(II)-heme o + diphosphate. Its pathway is porphyrin-containing compound metabolism; heme O biosynthesis; heme O from protoheme: step 1/1. Functionally, converts heme B (protoheme IX) to heme O by substitution of the vinyl group on carbon 2 of heme B porphyrin ring with a hydroxyethyl farnesyl side group. The protein is Protoheme IX farnesyltransferase 1 of Pseudomonas putida (strain GB-1).